The sequence spans 146 residues: 3-dehydroquinate dehydratase (146 aa).

Tyr23 serves as the catalytic Proton acceptor. Substrate contacts are provided by Asn74, His80, and Asp87. Catalysis depends on His100, which acts as the Proton donor. Residues 101–102 (IS) and Arg111 each bind substrate.

This sequence belongs to the type-II 3-dehydroquinase family. As to quaternary structure, homododecamer.

It catalyses the reaction 3-dehydroquinate = 3-dehydroshikimate + H2O. The protein operates within metabolic intermediate biosynthesis; chorismate biosynthesis; chorismate from D-erythrose 4-phosphate and phosphoenolpyruvate: step 3/7. Catalyzes a trans-dehydration via an enolate intermediate. The protein is 3-dehydroquinate dehydratase of Bacillus cytotoxicus (strain DSM 22905 / CIP 110041 / 391-98 / NVH 391-98).